Consider the following 398-residue polypeptide: Acetate kinase (398 aa).

Asn8 serves as a coordination point for Mg(2+). Lys15 is a binding site for ATP. Residue Arg89 participates in substrate binding. Asp146 (proton donor/acceptor) is an active-site residue. ATP-binding positions include 206 to 210 (HIGNG), 283 to 285 (DMR), and 331 to 335 (GMGEN). Glu383 contacts Mg(2+).

It belongs to the acetokinase family. As to quaternary structure, homodimer. Requires Mg(2+) as cofactor. Mn(2+) serves as cofactor.

The protein localises to the cytoplasm. It catalyses the reaction acetate + ATP = acetyl phosphate + ADP. Its pathway is metabolic intermediate biosynthesis; acetyl-CoA biosynthesis; acetyl-CoA from acetate: step 1/2. Catalyzes the formation of acetyl phosphate from acetate and ATP. Can also catalyze the reverse reaction. The chain is Acetate kinase from Streptococcus pyogenes serotype M1.